A 509-amino-acid polypeptide reads, in one-letter code: MQLNKYKNQNVAVFGLGKTGLSAINALTKSGARIYAWDDHEEQIANAKMMYKKCNFIHPKEYNWHEISALVLSPGVPTEPHWIVKLARRFDCKIKSDIELFLEAKTTNQKVIGVTGTNGKSTTTSLIGHILKSAGKKVAIGGNLGVPVLDLERDAEIYVIELSSFQLELMNEINVDISALLNITPDHIDRHGSMENYIATKLKLINGSEVAVIGCDNEITADIFNKFTGDKIPISVTYSPMSFQCVTLESRKEKPLPTTQMTEGGARDLISLAGNNLLDYSEQITGIDRNYLDPSVSYLDDKRGTGIQKISLKLENHSLSVSDVKINLISNAENIAATYAVCKVLGVDSNTIINGIKSFSGLRHRNELLGKIRNVFFVNDSKATNAKSSEKAILSYENINWIAGGRSKKGGIESLSKHFTRVRKAFLIGESTEAFANVMENKVDYVKCCNLEDAFRLAFEEALNSAEEVTILLSPACASFDQWKNFEERGEAFCRMFENLRYNHTCCLV.

116–122 contributes to the ATP binding site; that stretch reads GTNGKST.

It belongs to the MurCDEF family.

It is found in the cytoplasm. It carries out the reaction UDP-N-acetyl-alpha-D-muramoyl-L-alanine + D-glutamate + ATP = UDP-N-acetyl-alpha-D-muramoyl-L-alanyl-D-glutamate + ADP + phosphate + H(+). Its pathway is cell wall biogenesis; peptidoglycan biosynthesis. Functionally, cell wall formation. Catalyzes the addition of glutamate to the nucleotide precursor UDP-N-acetylmuramoyl-L-alanine (UMA). The polypeptide is UDP-N-acetylmuramoylalanine--D-glutamate ligase (Wolbachia pipientis wMel).